Reading from the N-terminus, the 236-residue chain is Flagellar L-ring protein (236 aa).

The N-terminal stretch at 1–16 (MRMRITAILAAGLLAG) is a signal peptide. Residue cysteine 17 is the site of N-palmitoyl cysteine attachment. Cysteine 17 carries the S-diacylglycerol cysteine lipid modification. The interval 96–143 (ENETDRSRKNSSGFNLGASGESQTSDFAWSGDLEYGSNTKTEGDGKTE) is disordered. A compositionally biased stretch (polar residues) spans 105–122 (NSSGFNLGASGESQTSDF).

The protein belongs to the FlgH family. As to quaternary structure, the basal body constitutes a major portion of the flagellar organelle and consists of four rings (L,P,S, and M) mounted on a central rod.

The protein resides in the cell outer membrane. The protein localises to the bacterial flagellum basal body. Its function is as follows. Assembles around the rod to form the L-ring and probably protects the motor/basal body from shearing forces during rotation. This chain is Flagellar L-ring protein, found in Sinorhizobium medicae (strain WSM419) (Ensifer medicae).